The primary structure comprises 174 residues: MSASETDRWAWLLVLCFVFGCNVLRILLPTLSSFISRVLQKDAEQESQMRAEIQSMKQELSTVNMMDEFARYARLERKINKMTDKLKTHVKARTAQLAKIKWFISVAFYVLQAALMISLIWKYYSVPVAVVPSKWITPLDRLVAFPTRVAGGIGVTCWILVCNKVVAIILHPFS.

The Lumenal portion of the chain corresponds to 1 to 8 (MSASETDR). Residues 9–29 (WAWLLVLCFVFGCNVLRILLP) traverse the membrane as a helical segment. Over 30–99 (TLSSFISRVL…VKARTAQLAK (70 aa)) the chain is Cytoplasmic. Residues 39-94 (LQKDAEQESQMRAEIQSMKQELSTVNMMDEFARYARLERKINKMTDKLKTHVKART) are a coiled coil. Residues 39–97 (LQKDAEQESQMRAEIQSMKQELSTVNMMDEFARYARLERKINKMTDKLKTHVKARTAQL) form an interaction with GET3/TRC40 region. The helical transmembrane segment at 100–120 (IKWFISVAFYVLQAALMISLI) threads the bilayer. Residues 121–148 (WKYYSVPVAVVPSKWITPLDRLVAFPTR) are Lumenal-facing. Residues 149-169 (VAGGIGVTCWILVCNKVVAII) form a helical membrane-spanning segment. Over 170 to 174 (LHPFS) the chain is Cytoplasmic.

This sequence belongs to the WRB/GET1 family. Component of the Golgi to ER traffic (GET) complex, which is composed of GET1, CAMLG/GET2 and GET3. Within the complex, GET1 and CAMLG form a heterotetramer which is stabilized by phosphatidylinositol binding and which binds to the GET3 homodimer. Interacts with CAMLG/GET2 (via C-terminus). GET3 shows a higher affinity for CAMLG than for GET1.

The protein localises to the endoplasmic reticulum membrane. Functionally, required for the post-translational delivery of tail-anchored (TA) proteins to the endoplasmic reticulum. Together with CAMLG/GET2, acts as a membrane receptor for soluble GET3/TRC40, which recognizes and selectively binds the transmembrane domain of TA proteins in the cytosol. Required to ensure correct topology and ER insertion of CAMLG. This is Guided entry of tail-anchored proteins factor 1 from Rattus norvegicus (Rat).